A 467-amino-acid chain; its full sequence is Cruzipain (467 aa).

Positions 1–18 (MSGWARALLLAAVLVVMA) are cleaved as a signal peptide. Residues 19 to 122 (CLVPAATASL…RVPVKVEVVG (104 aa)) constitute a propeptide, activation peptide. Disulfide bonds link C144–C185, C178–C223, and C277–C325. C147 is a catalytic residue. Residue N169 is glycosylated (N-linked (GlcNAc...) asparagine). H284 is an active-site residue. Residue N292 is glycosylated (N-linked (GlcNAc...) asparagine). N304 is a catalytic residue. Residues 333 to 355 (SAVVGGPGPTPEPTTTTTTSAPG) are disordered. A compositionally biased stretch (low complexity) spans 345–354 (PTTTTTTSAP). N-linked (GlcNAc...) asparagine glycosylation is present at N377.

Belongs to the peptidase C1 family.

The enzyme catalyses Broad endopeptidase specificity similar to that of cathepsin L.. Its activity is regulated as follows. Strongly inhibited by E-64 (L-trans-epoxysuccinylleucylamido(4-guanidino)butane), Leupeptin, and N-alpha-p-tosyl-L-lysine chloromethyl ketone. Functionally, hydrolyzes chromogenic peptides at the carboxyl Arg or Lys; requires at least one more amino acid, preferably Arg, Phe, Val or Leu, between the terminal Arg or Lys and the amino-blocking group. The cysteine protease may play an important role in the development and differentiation of the parasites at several stages of their life cycle. The chain is Cruzipain from Trypanosoma cruzi.